The sequence spans 250 residues: Indole-3-glycerol phosphate synthase (250 aa).

It belongs to the TrpC family.

It catalyses the reaction 1-(2-carboxyphenylamino)-1-deoxy-D-ribulose 5-phosphate + H(+) = (1S,2R)-1-C-(indol-3-yl)glycerol 3-phosphate + CO2 + H2O. It functions in the pathway amino-acid biosynthesis; L-tryptophan biosynthesis; L-tryptophan from chorismate: step 4/5. This Picrophilus torridus (strain ATCC 700027 / DSM 9790 / JCM 10055 / NBRC 100828 / KAW 2/3) protein is Indole-3-glycerol phosphate synthase.